The sequence spans 322 residues: Phosphatidylserine decarboxylase proenzyme (322 aa).

Active-site charge relay system; for autoendoproteolytic cleavage activity residues include Asp-90, His-147, and Ser-254. The Schiff-base intermediate with substrate; via pyruvic acid; for decarboxylase activity role is filled by Ser-254. Ser-254 is subject to Pyruvic acid (Ser); by autocatalysis. The interval 295-322 (VEPAPLPTEEIKAEHDASPLVDNKKDDT) is disordered. Residues 303–322 (EEIKAEHDASPLVDNKKDDT) are compositionally biased toward basic and acidic residues.

This sequence belongs to the phosphatidylserine decarboxylase family. PSD-B subfamily. Prokaryotic type I sub-subfamily. In terms of assembly, heterodimer of a large membrane-associated beta subunit and a small pyruvoyl-containing alpha subunit. Pyruvate is required as a cofactor. Is synthesized initially as an inactive proenzyme. Formation of the active enzyme involves a self-maturation process in which the active site pyruvoyl group is generated from an internal serine residue via an autocatalytic post-translational modification. Two non-identical subunits are generated from the proenzyme in this reaction, and the pyruvate is formed at the N-terminus of the alpha chain, which is derived from the carboxyl end of the proenzyme. The autoendoproteolytic cleavage occurs by a canonical serine protease mechanism, in which the side chain hydroxyl group of the serine supplies its oxygen atom to form the C-terminus of the beta chain, while the remainder of the serine residue undergoes an oxidative deamination to produce ammonia and the pyruvoyl prosthetic group on the alpha chain. During this reaction, the Ser that is part of the protease active site of the proenzyme becomes the pyruvoyl prosthetic group, which constitutes an essential element of the active site of the mature decarboxylase.

The protein localises to the cell membrane. The catalysed reaction is a 1,2-diacyl-sn-glycero-3-phospho-L-serine + H(+) = a 1,2-diacyl-sn-glycero-3-phosphoethanolamine + CO2. It functions in the pathway phospholipid metabolism; phosphatidylethanolamine biosynthesis; phosphatidylethanolamine from CDP-diacylglycerol: step 2/2. In terms of biological role, catalyzes the formation of phosphatidylethanolamine (PtdEtn) from phosphatidylserine (PtdSer). This chain is Phosphatidylserine decarboxylase proenzyme, found in Salmonella agona (strain SL483).